The primary structure comprises 423 residues: Putative competence-damage inducible protein (423 aa).

This sequence belongs to the CinA family.

The chain is Putative competence-damage inducible protein from Streptococcus pyogenes serotype M6 (strain ATCC BAA-946 / MGAS10394).